The chain runs to 480 residues: Aspartyl/glutamyl-tRNA(Asn/Gln) amidotransferase subunit B (480 aa).

This sequence belongs to the GatB/GatE family. GatB subfamily. Heterotrimer of A, B and C subunits.

The catalysed reaction is L-glutamyl-tRNA(Gln) + L-glutamine + ATP + H2O = L-glutaminyl-tRNA(Gln) + L-glutamate + ADP + phosphate + H(+). The enzyme catalyses L-aspartyl-tRNA(Asn) + L-glutamine + ATP + H2O = L-asparaginyl-tRNA(Asn) + L-glutamate + ADP + phosphate + 2 H(+). Functionally, allows the formation of correctly charged Asn-tRNA(Asn) or Gln-tRNA(Gln) through the transamidation of misacylated Asp-tRNA(Asn) or Glu-tRNA(Gln) in organisms which lack either or both of asparaginyl-tRNA or glutaminyl-tRNA synthetases. The reaction takes place in the presence of glutamine and ATP through an activated phospho-Asp-tRNA(Asn) or phospho-Glu-tRNA(Gln). The chain is Aspartyl/glutamyl-tRNA(Asn/Gln) amidotransferase subunit B from Streptococcus pneumoniae (strain CGSP14).